The chain runs to 155 residues: S-ribosylhomocysteine lyase (155 aa).

Residues H57, H61, and C124 each contribute to the Fe cation site.

This sequence belongs to the LuxS family. As to quaternary structure, homodimer. The cofactor is Fe cation.

The catalysed reaction is S-(5-deoxy-D-ribos-5-yl)-L-homocysteine = (S)-4,5-dihydroxypentane-2,3-dione + L-homocysteine. Functionally, involved in the synthesis of autoinducer 2 (AI-2) which is secreted by bacteria and is used to communicate both the cell density and the metabolic potential of the environment. The regulation of gene expression in response to changes in cell density is called quorum sensing. Catalyzes the transformation of S-ribosylhomocysteine (RHC) to homocysteine (HC) and 4,5-dihydroxy-2,3-pentadione (DPD). The sequence is that of S-ribosylhomocysteine lyase from Listeria monocytogenes serovar 1/2a (strain ATCC BAA-679 / EGD-e).